The sequence spans 477 residues: Dihydrolipoyl dehydrogenase (477 aa).

FAD contacts are provided by residues E34–C49, K58, and G122. C49 and C54 are oxidised to a cystine. NAD(+) is bound by residues G188–I192, E211, V245, and A276–R279. FAD contacts are provided by D319 and A327. The Proton acceptor role is filled by H451.

It belongs to the class-I pyridine nucleotide-disulfide oxidoreductase family. Homodimer. It depends on FAD as a cofactor.

Its subcellular location is the cytoplasm. It carries out the reaction N(6)-[(R)-dihydrolipoyl]-L-lysyl-[protein] + NAD(+) = N(6)-[(R)-lipoyl]-L-lysyl-[protein] + NADH + H(+). Its function is as follows. The pyruvate dehydrogenase complex catalyzes the overall conversion of pyruvate to acetyl-CoA and CO(2). It contains multiple copies of three enzymatic components: pyruvate dehydrogenase (E1), dihydrolipoamide acetyltransferase (E2) and lipoamide dehydrogenase (E3). The sequence is that of Dihydrolipoyl dehydrogenase from Azotobacter vinelandii.